The sequence spans 146 residues: D-aminoacyl-tRNA deacylase (146 aa).

Residues 138 to 139 (GP) carry the Gly-cisPro motif, important for rejection of L-amino acids motif.

Belongs to the DTD family. In terms of assembly, homodimer.

It is found in the cytoplasm. The catalysed reaction is glycyl-tRNA(Ala) + H2O = tRNA(Ala) + glycine + H(+). It carries out the reaction a D-aminoacyl-tRNA + H2O = a tRNA + a D-alpha-amino acid + H(+). Its function is as follows. An aminoacyl-tRNA editing enzyme that deacylates mischarged D-aminoacyl-tRNAs. Also deacylates mischarged glycyl-tRNA(Ala), protecting cells against glycine mischarging by AlaRS. Acts via tRNA-based rather than protein-based catalysis; rejects L-amino acids rather than detecting D-amino acids in the active site. By recycling D-aminoacyl-tRNA to D-amino acids and free tRNA molecules, this enzyme counteracts the toxicity associated with the formation of D-aminoacyl-tRNA entities in vivo and helps enforce protein L-homochirality. This is D-aminoacyl-tRNA deacylase from Xanthomonas campestris pv. campestris (strain 8004).